The chain runs to 202 residues: Orotate phosphoribosyltransferase (202 aa).

Residues K93 and 113–121 (EDIITTGGS) each bind 5-phospho-alpha-D-ribose 1-diphosphate. T117 and R145 together coordinate orotate.

The protein belongs to the purine/pyrimidine phosphoribosyltransferase family. PyrE subfamily. Homodimer. Mg(2+) serves as cofactor.

The enzyme catalyses orotidine 5'-phosphate + diphosphate = orotate + 5-phospho-alpha-D-ribose 1-diphosphate. The protein operates within pyrimidine metabolism; UMP biosynthesis via de novo pathway; UMP from orotate: step 1/2. Its function is as follows. Catalyzes the transfer of a ribosyl phosphate group from 5-phosphoribose 1-diphosphate to orotate, leading to the formation of orotidine monophosphate (OMP). In Campylobacter curvus (strain 525.92), this protein is Orotate phosphoribosyltransferase.